A 141-amino-acid chain; its full sequence is ATP synthase epsilon chain (141 aa).

This sequence belongs to the ATPase epsilon chain family. In terms of assembly, F-type ATPases have 2 components, CF(1) - the catalytic core - and CF(0) - the membrane proton channel. CF(1) has five subunits: alpha(3), beta(3), gamma(1), delta(1), epsilon(1). CF(0) has three main subunits: a, b and c.

The protein resides in the cell inner membrane. Functionally, produces ATP from ADP in the presence of a proton gradient across the membrane. In Azoarcus sp. (strain BH72), this protein is ATP synthase epsilon chain.